The sequence spans 295 residues: Glutamyl-Q tRNA(Asp) synthetase (295 aa).

Residues 5–9 (RFAPS) and E41 each bind L-glutamate. The 'HIGH' region signature appears at 8-18 (PSPTGLLHIGS). Zn(2+) is bound by residues C97, C99, Y117, and C121. 2 residues coordinate L-glutamate: Y178 and R196. A 'KMSKS' region motif is present at residues 234–238 (KWSKQ). K237 is a binding site for ATP.

It belongs to the class-I aminoacyl-tRNA synthetase family. GluQ subfamily. Zn(2+) is required as a cofactor.

Its function is as follows. Catalyzes the tRNA-independent activation of glutamate in presence of ATP and the subsequent transfer of glutamate onto a tRNA(Asp). Glutamate is transferred on the 2-amino-5-(4,5-dihydroxy-2-cyclopenten-1-yl) moiety of the queuosine in the wobble position of the QUC anticodon. This chain is Glutamyl-Q tRNA(Asp) synthetase, found in Neisseria meningitidis serogroup C (strain 053442).